The following is a 507-amino-acid chain: Interleukin-17 receptor E-like protein (507 aa).

A signal peptide spans 1–21 (MLAGQALAFLGLTWGTFQSLA).

It localises to the secreted. The sequence is that of Interleukin-17 receptor E-like protein from Homo sapiens (Human).